The sequence spans 275 residues: NH(3)-dependent NAD(+) synthetase (275 aa).

46–53 (GISGGQDS) contacts ATP. Residue D52 coordinates Mg(2+). R140 contacts deamido-NAD(+). Position 160 (T160) interacts with ATP. E165 serves as a coordination point for Mg(2+). Residues K173 and D180 each coordinate deamido-NAD(+). Residues K189 and T211 each contribute to the ATP site. A deamido-NAD(+)-binding site is contributed by 260–261 (HK).

This sequence belongs to the NAD synthetase family. As to quaternary structure, homodimer.

It catalyses the reaction deamido-NAD(+) + NH4(+) + ATP = AMP + diphosphate + NAD(+) + H(+). It participates in cofactor biosynthesis; NAD(+) biosynthesis; NAD(+) from deamido-NAD(+) (ammonia route): step 1/1. Functionally, catalyzes the ATP-dependent amidation of deamido-NAD to form NAD. Uses ammonia as a nitrogen source. This Escherichia coli O157:H7 protein is NH(3)-dependent NAD(+) synthetase.